Here is a 290-residue protein sequence, read N- to C-terminus: Acetyl-coenzyme A carboxylase carboxyl transferase subunit beta (290 aa).

The CoA carboxyltransferase N-terminal domain maps to 28–290; sequence IMTKCPKCKK…TGGDIEWLQD (263 aa). Zn(2+) is bound by residues Cys-32, Cys-35, Cys-51, and Cys-54. The C4-type zinc finger occupies 32 to 54; that stretch reads CPKCKKIMLTKELDKNMRVCMNC.

This sequence belongs to the AccD/PCCB family. Acetyl-CoA carboxylase is a heterohexamer composed of biotin carboxyl carrier protein (AccB), biotin carboxylase (AccC) and two subunits each of ACCase subunit alpha (AccA) and ACCase subunit beta (AccD). Requires Zn(2+) as cofactor.

It localises to the cytoplasm. The enzyme catalyses N(6)-carboxybiotinyl-L-lysyl-[protein] + acetyl-CoA = N(6)-biotinyl-L-lysyl-[protein] + malonyl-CoA. It functions in the pathway lipid metabolism; malonyl-CoA biosynthesis; malonyl-CoA from acetyl-CoA: step 1/1. Inhibited by pyrrolidine dione antibiotics moiramide B (CPD1) and CPD2. Functionally, component of the acetyl coenzyme A carboxylase (ACC) complex. Biotin carboxylase (BC) catalyzes the carboxylation of biotin on its carrier protein (BCCP) and then the CO(2) group is transferred by the transcarboxylase to acetyl-CoA to form malonyl-CoA. The polypeptide is Acetyl-coenzyme A carboxylase carboxyl transferase subunit beta (Bacillus subtilis (strain 168)).